Consider the following 569-residue polypeptide: MSEASGNLNSLRMANVALREELNALRGENANLGLQLGRALAEVNSLRGNVSSYIRWPVPIVPVLAEENLEFALSEIEVIPGGELPFLCRPPPRAEPDCISDDLLINVIQDRSTPDGPADPPLLPIPPPPALPPPASKEPPPQPPLAPLERPEIEPFSGDPVYLAEFLMQLETFIADHEVHFPGGAERVAFLISFFTGEAKDWAISVTQEGSPLHANFPRFLDEIRKEFCGPIPPRVAKKAIRKLKQGHCTLGSYADAFQFLAQFLSWDDCRLQNQFLKGLSEFFRKELLWSTEMADLDELILECVEIERKVRVPKPIPLPGVRNIIFPFAPSPNEEESEDEEYYSEDEDQEARRHRLHSKDQRKRMRAFQQEMKEKEEEEMKKEEEMKKKEEKEEEEEEEMKQKEEEEEIRNKNEEEGESKDEEDEDEDGGQKPEGEPQQDPGTEETYGEVEEEPLDEAQDDDLDELMEMEPTFVHASSQTSGPTSGYHAENFLGASPPIIQPSRRRNQNRVPLLEGLPGTNSPFYSSPQLIRRTGRLGQRQVRRRPPVLFRLTPRQGGHRAARGRIRV.

Disordered regions lie at residues 115 to 151 (DGPA…LERP) and 323 to 506 (RNII…PSRR). Residues 117-146 (PADPPLLPIPPPPALPPPASKEPPPQPPLA) are compositionally biased toward pro residues. The span at 334 to 350 (NEEESEDEEYYSEDEDQ) shows a compositional bias: acidic residues. Over residues 353–367 (RRHRLHSKDQRKRMR) the composition is skewed to basic residues. 2 stretches are compositionally biased toward basic and acidic residues: residues 372-392 (EMKE…KKEE) and 401-415 (MKQK…NKNE). Composition is skewed to acidic residues over residues 416–429 (EEGE…EDED) and 443–469 (GTEE…ELME). Over residues 476–485 (HASSQTSGPT) the composition is skewed to polar residues.

This is Retrotransposon Gag-like protein 5 from Homo sapiens (Human).